The sequence spans 24 residues: Brevinin-1GRa (24 aa).

Expressed by the skin glands.

It localises to the secreted. Its function is as follows. Antimicrobial peptide active against the Gram-positive bacterium S.aureus (MIC=12.5 uM) and against the Gram-negative bacteria E.coli (MIC=25 uM). In Odorrana grahami (Yunnanfu frog), this protein is Brevinin-1GRa.